The sequence spans 490 residues: Cardiolipin synthase A (490 aa).

2 consecutive transmembrane segments (helical) span residues 20–40 (LGLL…HAVL) and 49–69 (IAWA…YLVF). PLD phosphodiesterase domains are found at residues 229-256 (VNFR…GVEY) and 403-430 (QPGF…DNRS). Residues His234, Lys236, Asp241, His408, Lys410, and Asp415 contribute to the active site.

It belongs to the phospholipase D family. Cardiolipin synthase subfamily. ClsA sub-subfamily.

Its subcellular location is the cell inner membrane. The catalysed reaction is 2 a 1,2-diacyl-sn-glycero-3-phospho-(1'-sn-glycerol) = a cardiolipin + glycerol. Functionally, catalyzes the reversible phosphatidyl group transfer from one phosphatidylglycerol molecule to another to form cardiolipin (CL) (diphosphatidylglycerol) and glycerol. In Pseudomonas aeruginosa (strain LESB58), this protein is Cardiolipin synthase A.